The primary structure comprises 187 residues: Shikimate kinase (187 aa).

An ATP-binding site is contributed by 18 to 23; the sequence is GCGKST. Serine 22 is a Mg(2+) binding site. Residues aspartate 40, arginine 64, and glycine 86 each coordinate substrate. Arginine 128 is an ATP binding site. Substrate is bound at residue arginine 147. Arginine 164 contributes to the ATP binding site.

This sequence belongs to the shikimate kinase family. As to quaternary structure, monomer. Mg(2+) serves as cofactor.

The protein localises to the cytoplasm. The enzyme catalyses shikimate + ATP = 3-phosphoshikimate + ADP + H(+). Its pathway is metabolic intermediate biosynthesis; chorismate biosynthesis; chorismate from D-erythrose 4-phosphate and phosphoenolpyruvate: step 5/7. Functionally, catalyzes the specific phosphorylation of the 3-hydroxyl group of shikimic acid using ATP as a cosubstrate. The sequence is that of Shikimate kinase from Rhodopirellula baltica (strain DSM 10527 / NCIMB 13988 / SH1).